Reading from the N-terminus, the 163-residue chain is Bacterial microcompartment assembly protein PduM (163 aa).

The protein belongs to the PduM family. As to quaternary structure, interacts with shell protein PduK.

The protein resides in the bacterial microcompartment. It functions in the pathway polyol metabolism; 1,2-propanediol degradation. Functionally, plays an essential role in assembly and/or stability of the bacterial microcompartment (BMC) dedicated to 1,2-propanediol (1,2-PD) degradation. Overexpression impairs BMC formation. In terms of biological role, the 1,2-PD-specific bacterial microcompartment (BMC) concentrates low levels of 1,2-PD catabolic enzymes, concentrates volatile reaction intermediates thus enhancing pathway flux and keeps the level of toxic, mutagenic propionaldehyde low. The polypeptide is Bacterial microcompartment assembly protein PduM (Salmonella typhimurium (strain LT2 / SGSC1412 / ATCC 700720)).